A 379-amino-acid chain; its full sequence is Homoserine O-acetyltransferase (379 aa).

Residues 54-332 form the AB hydrolase-1 domain; it reads NAILVCHALS…PYQSEEIVKS (279 aa). S159 acts as the Nucleophile in catalysis. R228 serves as a coordination point for substrate. Residues D318 and H352 contribute to the active site. D353 contributes to the substrate binding site.

This sequence belongs to the AB hydrolase superfamily. MetX family. Homodimer.

Its subcellular location is the cytoplasm. It carries out the reaction L-homoserine + acetyl-CoA = O-acetyl-L-homoserine + CoA. The protein operates within amino-acid biosynthesis; L-methionine biosynthesis via de novo pathway; O-acetyl-L-homoserine from L-homoserine: step 1/1. In terms of biological role, transfers an acetyl group from acetyl-CoA to L-homoserine, forming acetyl-L-homoserine. The protein is Homoserine O-acetyltransferase of Leptospira meyeri.